A 222-amino-acid chain; its full sequence is Octanoyltransferase (222 aa).

The 176-residue stretch at 32 to 207 (RDRPDVLMLL…AFARVFGVQC (176 aa)) folds into the BPL/LPL catalytic domain. Substrate is bound by residues 72–79 (RGGEVTYH), 139–141 (ALG), and 152–154 (GFA). Cys-170 functions as the Acyl-thioester intermediate in the catalytic mechanism.

It belongs to the LipB family.

The protein localises to the cytoplasm. It carries out the reaction octanoyl-[ACP] + L-lysyl-[protein] = N(6)-octanoyl-L-lysyl-[protein] + holo-[ACP] + H(+). The protein operates within protein modification; protein lipoylation via endogenous pathway; protein N(6)-(lipoyl)lysine from octanoyl-[acyl-carrier-protein]: step 1/2. In terms of biological role, catalyzes the transfer of endogenously produced octanoic acid from octanoyl-acyl-carrier-protein onto the lipoyl domains of lipoate-dependent enzymes. Lipoyl-ACP can also act as a substrate although octanoyl-ACP is likely to be the physiological substrate. This chain is Octanoyltransferase, found in Gloeobacter violaceus (strain ATCC 29082 / PCC 7421).